The sequence spans 200 residues: Recoverin (200 aa).

A lipid anchor (N-myristoyl glycine) is attached at G2. EF-hand domains lie at 25–60 (EEEL…FPDT), 61–96 (DPKA…TTAG), 97–132 (KTNQ…IFKM), and 147–182 (TPEK…NKEI). Position 39 is a cysteine sulfenic acid (-SOH) (C39). Residues D74, N76, D78, T80, E85, D110, D112, N114, T116, and E121 each coordinate Ca(2+). An interaction with GRK1 region spans residues 189–192 (EPQK).

This sequence belongs to the recoverin family. In terms of assembly, homodimer; disulfide-linked. Homodimerization is caused by prolonged intense illumination. May form a complex composed of RHO, GRK1 and RCVRN in a Ca(2+)-dependent manner; RCVRN prevents the interaction between GRK1 and RHO. Interacts (via C-terminus) with GRK1 (via N-terminus); the interaction is Ca(2+)-dependent. In terms of processing, the N-terminal glycine is linked to one of four different types of acyl groups. The most abundant is myristoleate (14:1), but 14:0, 14:2, and 12:0 acyl residues are also present. The Ca(2+) induced exposure of the myristoyl group, known as the calcium-myristoyl switch, promotes RCVRN binding to the photoreceptor cell membranes only when intracellular Ca(2+) concentration is high. Post-translationally, oxidation on Cys-39 occurs in response to prolonged intense illumination and results in the formation of disulfide homodimers, and to a lesser extent disulfide-linked heterodimers. As to expression, retina and pineal gland.

It localises to the photoreceptor inner segment. Its subcellular location is the cell projection. The protein localises to the cilium. It is found in the photoreceptor outer segment. The protein resides in the photoreceptor outer segment membrane. It localises to the perikaryon. Its function is as follows. Acts as a calcium sensor and regulates phototransduction of cone and rod photoreceptor cells. Modulates light sensitivity of cone photoreceptor in dark and dim conditions. In response to high Ca(2+) levels induced by low light levels, prolongs RHO/rhodopsin activation in rod photoreceptor cells by binding to and inhibiting GRK1-mediated phosphorylation of RHO/rhodopsin. Plays a role in scotopic vision/enhances vision in dim light by enhancing signal transfer between rod photoreceptors and rod bipolar cells. Improves rod photoreceptor sensitivity in dim light and mediates response of rod photoreceptors to facilitate detection of change and motion in bright light. The polypeptide is Recoverin (RCVRN) (Homo sapiens (Human)).